The following is a 335-amino-acid chain: Homeobox protein DBX1 (335 aa).

Disordered stretches follow at residues 58-102 (IPAA…LSPA) and 240-335 (KERE…ITVS). Positions 83–95 (GSPGSGSRRGSSP) are enriched in low complexity. Residues 181 to 240 (GMLRRAVFSDVQRKALEKTFQKQKYISKPDRKKLASKLGLKDSQVKIWFQNRRMKWRNSK) constitute a DNA-binding region (homeobox). The segment covering 299–317 (GPLPASPAHSSSPGKPSDF) has biased composition (low complexity). The span at 318 to 335 (SDSDEDEEGEEDEEITVS) shows a compositional bias: acidic residues.

The protein belongs to the H2.0 homeobox family.

It is found in the nucleus. Could have a role in patterning the central nervous system during embryogenesis. Has a key role in regulating the distinct phenotypic features that distinguish two major classes of ventral interneurons, V0 and V1 neurons. Regulates the transcription factor profile, neurotransmitter phenotype, intraspinal migratory path and axonal trajectory of V0 neurons, features that differentiate them from an adjacent set of V1 neurons. This chain is Homeobox protein DBX1 (Dbx1), found in Mus musculus (Mouse).